A 417-amino-acid chain; its full sequence is Phosphoglycerate kinase (417 aa).

Residues Val23, Asp24, Phe25, Asn26, Gln38, Arg39, Ser62, His63, Gly65, Arg66, Leu121, Arg122, His169, and Arg170 each contribute to the (2R)-3-phosphoglycerate site. Gly213 contacts ADP. A CDP-binding site is contributed by Gly213. AMP contacts are provided by Ala214 and Lys215. Residue Ala214 participates in ATP binding. Ala214 lines the Mg(2+) pocket. Asp218 serves as a coordination point for CDP. Asp218 serves as a coordination point for Mg(2+). AMP is bound at residue Lys219. Lys219 contributes to the ATP binding site. ADP is bound at residue Gly237. Position 237 (Gly237) interacts with CDP. Residues Gly238 and Gly312 each contribute to the AMP site. The ATP site is built by Gly238 and Gly312. CDP contacts are provided by Gly337 and Phe342. Residue Phe342 participates in ADP binding. Position 343 (Glu343) interacts with AMP. ATP is bound by residues Glu343, Asp374, and Thr375. Asp374 provides a ligand contact to Mg(2+).

Belongs to the phosphoglycerate kinase family. Monomer. It depends on Mg(2+) as a cofactor.

The protein resides in the cytoplasm. It is found in the secreted. The protein localises to the cell wall. It localises to the mitochondrion. The enzyme catalyses (2R)-3-phosphoglycerate + ATP = (2R)-3-phospho-glyceroyl phosphate + ADP. It functions in the pathway carbohydrate degradation; glycolysis; pyruvate from D-glyceraldehyde 3-phosphate: step 2/5. Its function is as follows. Catalyzes one of the two ATP producing reactions in the glycolytic pathway via the reversible conversion of 1,3-diphosphoglycerate to 3-phosphoglycerate. Both L- and D- forms of purine and pyrimidine nucleotides can be used as substrates, but the activity is much lower on pyrimidines. Negatively regulates the biosynthesis of acetyl-CoA from pyruvate in the mitochondrion. The protein is Phosphoglycerate kinase (PGK1) of Candida albicans (strain SC5314 / ATCC MYA-2876) (Yeast).